The sequence spans 130 residues: Ribonuclease VapC46 (130 aa).

The PINc domain occupies 4-118 (IYLDSSAIVK…CTYDDRMRDA (115 aa)). Positions 7 and 91 each coordinate Mg(2+).

Belongs to the PINc/VapC protein family. Requires Mg(2+) as cofactor.

Functionally, toxic component of a type II toxin-antitoxin (TA) system. An RNase. Upon expression in M.smegmatis inhibits colony formation. Its toxic effect is neutralized by coexpression with cognate antitoxin VapB46. This chain is Ribonuclease VapC46, found in Mycobacterium tuberculosis (strain ATCC 25618 / H37Rv).